Here is a 346-residue protein sequence, read N- to C-terminus: MDSCEVTKTRIPFKERPDWADVKPVPQDDGPCPVVPIAYTEDFSETMDYFRAIYVADERSTRALQLTGEAIQLNPGNYTVWQFRRVVLEALGVDLREELKFVDRIAGENTKNYQIWHHRRWLAEKLGADAVTNELEFTKKIFSQDAKNYHAWSHRQWVLQALGGWEDELAYCQQLLEDDIYNNSAWNQRYFVVTRSPLLGGLVAMRELEVNYTVQAIRASPENESPWRYLRGLYKNDTQSLVQDSQVASVLWDVLTSQNSHVHALRFLLDLLCHDLEPSQELKSAVDVLTPQSCSPDLALTKKICSILEHADPMRVKYWNWRKSMVRVQLLQSQNAERLANLSVQE.

PFTA repeat units lie at residues 59-93, 94-128, 130-164, 165-198, and 205-239; these read RSTR…ALGV, DLRE…KLGA, AVTN…ALGG, WEDE…RSPL, and MREL…NDTQ.

The protein belongs to the protein prenyltransferase subunit alpha family. In terms of assembly, heterodimer of an alpha and a beta subunit. Mg(2+) is required as a cofactor.

The enzyme catalyses L-cysteinyl-[protein] + (2E,6E)-farnesyl diphosphate = S-(2E,6E)-farnesyl-L-cysteinyl-[protein] + diphosphate. It carries out the reaction geranylgeranyl diphosphate + L-cysteinyl-[protein] = S-geranylgeranyl-L-cysteinyl-[protein] + diphosphate. In terms of biological role, essential subunit of both the farnesyltransferase and the geranylgeranyltransferase complex. Contributes to the transfer of a farnesyl or geranylgeranyl moiety from farnesyl or geranylgeranyl diphosphate to a cysteine at the fourth position from the C-terminus of several proteins having the C-terminal sequence Cys-aliphatic-aliphatic-X. In Solanum lycopersicum (Tomato), this protein is Protein farnesyltransferase/geranylgeranyltransferase type-1 subunit alpha (FTA).